The primary structure comprises 223 residues: ATP phosphoribosyltransferase (223 aa).

It belongs to the ATP phosphoribosyltransferase family. Short subfamily. In terms of assembly, heteromultimer composed of HisG and HisZ subunits.

Its subcellular location is the cytoplasm. It catalyses the reaction 1-(5-phospho-beta-D-ribosyl)-ATP + diphosphate = 5-phospho-alpha-D-ribose 1-diphosphate + ATP. The protein operates within amino-acid biosynthesis; L-histidine biosynthesis; L-histidine from 5-phospho-alpha-D-ribose 1-diphosphate: step 1/9. Functionally, catalyzes the condensation of ATP and 5-phosphoribose 1-diphosphate to form N'-(5'-phosphoribosyl)-ATP (PR-ATP). Has a crucial role in the pathway because the rate of histidine biosynthesis seems to be controlled primarily by regulation of HisG enzymatic activity. The sequence is that of ATP phosphoribosyltransferase from Desulfitobacterium hafniense (strain Y51).